The sequence spans 382 residues: MSEVPSAFFSSPAAGGIVLIIASAAAIIVANSPLREGYEVFLKYNAAGLSVEHWINDALMAVFFMMVGLEIKRELLTGQLATWGQRALPGFAALGGMAVPAAIYVWFNAGSDETLAGWAIPAATDIAFALGVLALLGSRVPASLKIFLSALAILDDMGAVAIIALFYTSNISFLMLAGAAVTVALLFIMNRAGITRLFPYLLAGGVLWFFMLQSGVHATIAGILLALFIPLRVTDPDKQSPLARLEHGINPWVTFLILPLFGFANAGVALSGMTADDLMSPVPVGVALGLFVGKQAGIFGLSLLAVSLGLAKRPEKSTWLQVYGVSVLCGIGFTMSLFIGNLAFAESPLLVDEVKVGVLAGSVLAALAGMLILRFSPSHPSR.

Transmembrane regions (helical) follow at residues 8–28 (FFSS…AAII), 49–69 (LSVE…MVGL), 87–107 (ALPG…YVWF), 115–135 (LAGW…VLAL), 146–166 (IFLS…IALF), 169–189 (SNIS…LFIM), 209–229 (FFML…ALFI), 252–272 (WVTF…ALSG), 286–306 (VALG…LLAV), 325–345 (VSVL…LAFA), and 353–373 (EVKV…MLIL).

This sequence belongs to the NhaA Na(+)/H(+) (TC 2.A.33) antiporter family.

Its subcellular location is the cell inner membrane. The enzyme catalyses Na(+)(in) + 2 H(+)(out) = Na(+)(out) + 2 H(+)(in). In terms of biological role, na(+)/H(+) antiporter that extrudes sodium in exchange for external protons. The polypeptide is Na(+)/H(+) antiporter NhaA 2 (Klebsiella pneumoniae subsp. pneumoniae (strain ATCC 700721 / MGH 78578)).